Reading from the N-terminus, the 746-residue chain is H(+)/Cl(-) exchange transporter 5 (746 aa).

At 1-54 (MDFLEEPIPGVGTYDDFNTIDWVREKSRDRDRHREITNRSKESTWALIHSVSDA) the chain is on the cytoplasmic side. A run of 2 helical transmembrane segments spans residues 55–92 (FSGW…ICTE) and 138–161 (VNYF…VKVF). Positions 167–171 (GSGIP) match the Selectivity filter part_1 motif. Ser-168 is a chloride binding site. Positions 170 to 177 (IPEIKTIL) form an intramembrane region, helical. Helical transmembrane passes span 186–205 (LGKW…VSSG) and 211–230 (EGPL…HCFN). Residues 209 to 213 (GKEGP) carry the Selectivity filter part_2 motif. 2 consecutive intramembrane regions (helical) follow at residues 242 to 254 (VLSA…VSVA) and 258 to 266 (PIGGVLFSL). The next 5 membrane-spanning stretches (helical) occupy residues 278-296 (LWRS…RSIN), 319-344 (LVPF…IAWC), 352-372 (LGKY…ILAF), 428-448 (MWQL…TFGM), and 453-472 (GLFI…LGVG). The Selectivity filter part_3 signature appears at 453–457 (GLFIP). Phe-455 is a binding site for chloride. The helical intramembrane region spans 500-514 (GLYAMVGAAACLGGV). The segment at residues 515–517 (TRM) is an intramembrane region (note=Loop between two helices). The segment at residues 518 to 529 (TVSLVVIMFELT) is an intramembrane region (helical). An intramembrane region (note=Loop between two helices) is located at residues 530–534 (GGLEY). A helical membrane pass occupies residues 535–552 (IVPLMAAAMTSKWVADAL). At 553–746 (GREGIYDAHI…NQDPDSILFN (194 aa)) the chain is on the cytoplasmic side. Tyr-558 provides a ligand contact to chloride. 2 CBS domains span residues 586-650 (MKPR…ARKE) and 682-742 (ILDL…DPDS). Residues Thr-596, 617–619 (YSG), and 724–727 (TKKD) contribute to the ATP site.

The protein belongs to the chloride channel (TC 2.A.49) family. ClC-5/CLCN5 subfamily. In terms of assembly, interacts with NEDD4 and NEDD4L. In terms of processing, ubiquitinated by NEDD4L in the presence of albumin; which promotes endocytosis and proteasomal degradation. Detected in duodenum, jejunum and ileum. Detected in crypt and villus regions of the epithelium of the small intestine.

The protein resides in the golgi apparatus membrane. It localises to the endosome membrane. It is found in the cell membrane. The enzyme catalyses 2 chloride(in) + H(+)(out) = 2 chloride(out) + H(+)(in). Its function is as follows. Proton-coupled chloride transporter. Functions as antiport system and exchanges chloride ions against protons. Important for normal acidification of the endosome lumen. May play an important role in renal tubular function. The CLC channel family contains both chloride channels and proton-coupled anion transporters that exchange chloride or another anion for protons. The absence of conserved gating glutamate residues is typical for family members that function as channels. This Cavia porcellus (Guinea pig) protein is H(+)/Cl(-) exchange transporter 5 (CLCN5).